The chain runs to 916 residues: RNA-directed DNA polymerase from mobile element jockey (916 aa).

The 275-residue stretch at 483-757 (SVLDVGYFPK…QAYKYLGITL (275 aa)) folds into the Reverse transcriptase domain.

Requires Mg(2+) as cofactor. Mn(2+) serves as cofactor.

The enzyme catalyses DNA(n) + a 2'-deoxyribonucleoside 5'-triphosphate = DNA(n+1) + diphosphate. Inactivated by sulphydryl reagent. The protein is RNA-directed DNA polymerase from mobile element jockey (pol) of Drosophila melanogaster (Fruit fly).